A 210-amino-acid polypeptide reads, in one-letter code: Transposable element activator uncharacterized 23 kDa protein (210 aa).

Over residues 67 to 78 (SGRMGGPRRDGR) the composition is skewed to basic and acidic residues. A disordered region spans residues 67-87 (SGRMGGPRRDGRVASSGVEGG).

This is Transposable element activator uncharacterized 23 kDa protein from Zea mays (Maize).